We begin with the raw amino-acid sequence, 618 residues long: Putative UDP-glucuronate:xylan alpha-glucuronosyltransferase 3 (618 aa).

Residues 32–54 (GVKFNTLKLVLICIMLGALFTIY) traverse the membrane as a helical; Signal-anchor for type II membrane protein segment. 2 residues coordinate Mn(2+): Asp379 and Asp381. Substrate-binding positions include 379–381 (DAD), 408–410 (NSG), 435–439 (NGGDQ), and 489–495 (HYLGYNK). Residue His489 participates in Mn(2+) binding. Residues 598–608 (TNNSSTTTTSS) show a composition bias toward low complexity. The disordered stretch occupies residues 598–618 (TNNSSTTTTSSPPHKTALPSL).

This sequence belongs to the glycosyltransferase 8 family. Glycogenin subfamily. Mn(2+) serves as cofactor.

The protein resides in the golgi apparatus membrane. Functionally, may be involved in the substitutions of the xylan backbone in stem glucuronoxylan. The sequence is that of Putative UDP-glucuronate:xylan alpha-glucuronosyltransferase 3 (GUX3) from Arabidopsis thaliana (Mouse-ear cress).